The following is a 92-amino-acid chain: Elongation factor 1-beta (92 aa).

It belongs to the EF-1-beta/EF-1-delta family.

In terms of biological role, promotes the exchange of GDP for GTP in EF-1-alpha/GDP, thus allowing the regeneration of EF-1-alpha/GTP that could then be used to form the ternary complex EF-1-alpha/GTP/AAtRNA. The sequence is that of Elongation factor 1-beta from Pyrobaculum calidifontis (strain DSM 21063 / JCM 11548 / VA1).